The primary structure comprises 108 residues: MSETINVKIITPLNIVFEEQAKMITLPGEEGEFGVLQGHAPMIVSLKAGLLKVYIDDMHKPKITYLIANGVTEVTGSYINIATETAINITDLSEAEIENKLTALQKSI.

It belongs to the ATPase epsilon chain family. F-type ATPases have 2 components, CF(1) - the catalytic core - and CF(0) - the membrane proton channel. CF(1) has five subunits: alpha(3), beta(3), gamma(1), delta(1), epsilon(1). CF(0) has three main subunits: a, b and c.

The protein resides in the cell inner membrane. Functionally, produces ATP from ADP in the presence of a proton gradient across the membrane. The chain is ATP synthase epsilon chain from Rickettsia bellii (strain OSU 85-389).